The sequence spans 58 residues: Small ribosomal subunit protein bS21 (58 aa).

The segment covering 31-42 has biased composition (basic and acidic residues); the sequence is EIRKREHYEKPS. Positions 31 to 58 are disordered; that stretch reads EIRKREHYEKPSVKRKKKSEAARKRKYN. The segment covering 43–58 has biased composition (basic residues); the sequence is VKRKKKSEAARKRKYN.

It belongs to the bacterial ribosomal protein bS21 family.

This Agathobacter rectalis (strain ATCC 33656 / DSM 3377 / JCM 17463 / KCTC 5835 / VPI 0990) (Eubacterium rectale) protein is Small ribosomal subunit protein bS21.